Consider the following 265-residue polypeptide: 3-methyl-2-oxobutanoate hydroxymethyltransferase (265 aa).

Residues Asp44 and Asp83 each contribute to the Mg(2+) site. 3-methyl-2-oxobutanoate-binding positions include 44-45, Asp83, and Lys113; that span reads DS. Residue Glu115 coordinates Mg(2+). Residue Glu183 is the Proton acceptor of the active site.

The protein belongs to the PanB family. Homodecamer; pentamer of dimers. Mg(2+) is required as a cofactor.

The protein resides in the cytoplasm. The enzyme catalyses 3-methyl-2-oxobutanoate + (6R)-5,10-methylene-5,6,7,8-tetrahydrofolate + H2O = 2-dehydropantoate + (6S)-5,6,7,8-tetrahydrofolate. It participates in cofactor biosynthesis; (R)-pantothenate biosynthesis; (R)-pantoate from 3-methyl-2-oxobutanoate: step 1/2. Its function is as follows. Catalyzes the reversible reaction in which hydroxymethyl group from 5,10-methylenetetrahydrofolate is transferred onto alpha-ketoisovalerate to form ketopantoate. In Leptospira borgpetersenii serovar Hardjo-bovis (strain L550), this protein is 3-methyl-2-oxobutanoate hydroxymethyltransferase.